The primary structure comprises 105 residues: Small ribosomal subunit protein bS20 (105 aa).

It belongs to the bacterial ribosomal protein bS20 family.

Binds directly to 16S ribosomal RNA. The protein is Small ribosomal subunit protein bS20 of Caldanaerobacter subterraneus subsp. tengcongensis (strain DSM 15242 / JCM 11007 / NBRC 100824 / MB4) (Thermoanaerobacter tengcongensis).